The primary structure comprises 153 residues: MARNTLSSRFRRVDIDEFDENKFVDEQEEAAAAAAEPGPDPSEVDGLLRQGDMLRAFHAALRNSPVNTKNQAVKERAQGVVLKVLTNFKSSEIEQAVQSLDRNGVDLLMKYIYKGFEKPTENSSAVLLQWHEKALAVGGLGSIIRVLTARKTV.

The residue at position 64 (S64) is a Phosphoserine.

The protein belongs to the ARPC5 family. As to quaternary structure, may be a component of the Arp2/3 complex in which it may replace ARPC5.

The protein localises to the cytoplasm. It is found in the cytoskeleton. May function as component of the Arp2/3 complex which is involved in regulation of actin polymerization and together with an activating nucleation-promoting factor (NPF) mediates the formation of branched actin networks. This is Actin-related protein 2/3 complex subunit 5-like protein (ARPC5L) from Pongo abelii (Sumatran orangutan).